The primary structure comprises 334 residues: Spermatogenesis-associated protein 32 (334 aa).

The interval 24–98 (SDHHRHHHHH…TESPEQQNYR (75 aa)) is disordered. Positions 37-47 (ENEDEDTEVEA) are enriched in acidic residues. Residues 48-60 (ELPRTEPPPKVDP) show a composition bias toward basic and acidic residues. Residues 77-98 (SKTTPETEGDSYTESPEQQNYR) are compositionally biased toward polar residues. Phosphoserine occurs at positions 135 and 138.

Interacts with syntaxin-1 and ACTB. In terms of tissue distribution, highly expressed in the testis and weakly in the brain and heart.

The protein is Spermatogenesis-associated protein 32 (Spata32) of Mus musculus (Mouse).